A 298-amino-acid chain; its full sequence is NFU1 iron-sulfur cluster scaffold homolog, mitochondrial (298 aa).

Residues Ile190 to Val258 form a nifU region. [4Fe-4S] cluster is bound by residues Cys227 and Cys230. Over residues Gln279 to Ala288 the composition is skewed to polar residues. Residues Gln279–Asn298 form a disordered region.

It belongs to the NifU family.

The protein resides in the mitochondrion. Its function is as follows. Molecular scaffold for [Fe-S] cluster assembly of mitochondrial iron-sulfur proteins. The polypeptide is NFU1 iron-sulfur cluster scaffold homolog, mitochondrial (Drosophila virilis (Fruit fly)).